A 464-amino-acid chain; its full sequence is Argininosuccinate lyase (464 aa).

Belongs to the lyase 1 family. Argininosuccinate lyase subfamily.

It is found in the cytoplasm. It catalyses the reaction 2-(N(omega)-L-arginino)succinate = fumarate + L-arginine. It functions in the pathway amino-acid biosynthesis; L-arginine biosynthesis; L-arginine from L-ornithine and carbamoyl phosphate: step 3/3. The sequence is that of Argininosuccinate lyase from Sulfurovum sp. (strain NBC37-1).